Reading from the N-terminus, the 672-residue chain is Leucine-rich repeat receptor-like protein kinase PXC1 (672 aa).

Positions 1–21 (MAAKPLLLPLLLLLHLSITLA) are cleaved as a signal peptide. The Extracellular portion of the chain corresponds to 22–269 (QNDTNALTLF…IHSHRGIKPG (248 aa)). 3 N-linked (GlcNAc...) asparagine glycosylation sites follow: asparagine 23, asparagine 44, and asparagine 101. The stretch at 87–110 (LDQLRLLDLHDNRLNGTVSPLTNC) is one LRR 1 repeat. Residue lysine 111 forms a Glycyl lysine isopeptide (Lys-Gly) (interchain with G-Cter in ubiquitin) linkage. LRR repeat units lie at residues 112–134 (NLRL…ISFL), 135–158 (KRMI…ILGF), 160–181 (RVLT…FSQM), and 182–205 (KSLL…VVKK). N-linked (GlcNAc...) asparagine glycosylation is found at asparagine 188 and asparagine 197. Polar residues predominate over residues 233–249 (ESSNTDQIVPSNPTSIP). The segment at 233–254 (ESSNTDQIVPSNPTSIPHSPVS) is disordered. The helical transmembrane segment at 270 to 290 (IIAAVIGGCVAVIVLVSFGFA) threads the bilayer. The Cytoplasmic portion of the chain corresponds to 291–672 (FCCGRLDRNG…MSPSLATTDG (382 aa)). The interval 300 to 333 (GERSKSGSVETGFVGGGEGKRRSSYGEGGESDAT) is disordered. Residues 357–645 (KASAEMLGKG…AEVVKMVEEI (289 aa)) enclose the Protein kinase domain. ATP is bound by residues 363-371 (LGKGSLGTV) and lysine 386. Residues 650 to 672 (SPVGEDFDESRNSMSPSLATTDG) are disordered. Over residues 661–672 (NSMSPSLATTDG) the composition is skewed to polar residues.

Belongs to the protein kinase superfamily. Ser/Thr protein kinase family. Expressed in the vascular strands of cotyledons, the shoot apex, hypocotyls, roots, leaves, stems and flowers.

It localises to the cell membrane. In terms of biological role, leucine-rich repeat receptor-like protein kinase involved in secondary cell wall formation in xylem fibers. May play a role in a regulatory network which also incorporates the TDR/PXY signaling pathway and regulates the maturation of interfascicular fiber cells. May promote the initiation of secondary cell wall deposition during the procedure of cell expansion. This Arabidopsis thaliana (Mouse-ear cress) protein is Leucine-rich repeat receptor-like protein kinase PXC1.